Consider the following 688-residue polypeptide: Mitochondrial potassium channel ATP-binding subunit (688 aa).

A mitochondrion-targeting transit peptide spans 1–31; the sequence is MLFHFLQAGLRQCRPPARLVGLETGLSGARG. The next 4 helical transmembrane spans lie at 115–135, 168–188, 268–288, and 342–362; these read PQLI…LLNI, LKLL…IVLL, GLLL…GSFL, and VLGV…NCIV. In terms of domain architecture, ABC transmembrane type-1 spans 121-409; that stretch reads LTAVLLAFGA…MSVLFGQVVR (289 aa). Residues 442 to 679 enclose the ABC transporter domain; sequence IHFKDVSFSY…GGLYADLIRR (238 aa). Position 477–484 (477–484) interacts with ATP; the sequence is GQSGGGKS.

The protein belongs to the ABC transporter superfamily. ABCB family. Multidrug resistance exporter (TC 3.A.1.201) subfamily. In terms of assembly, component of the mitochondrial potassium channel (mitoK(ATP)).

The protein resides in the mitochondrion inner membrane. In terms of biological role, ATP-binding subunit of the mitochondrial ATP-gated potassium channel (mitoK(ATP)). Together with pore-forming subunit CCDC51/MITOK of the mitoK(ATP) channel, mediates ATP-dependent potassium currents across the mitochondrial inner membrane. An increase in ATP intracellular levels closes the channel, inhibiting K(+) transport, whereas a decrease in ATP levels enhances K(+) uptake in the mitochondrial matrix. Plays a role in mitochondrial iron transport. Required for maintenance of normal cardiac function, possibly by influencing mitochondrial iron export and regulating the maturation of cytosolic iron sulfur cluster-containing enzymes. The polypeptide is Mitochondrial potassium channel ATP-binding subunit (Xenopus tropicalis (Western clawed frog)).